A 29-amino-acid chain; its full sequence is Varv peptide A (29 aa).

The cyclopeptide (Gly-Asn) cross-link spans 1–29 (GLPVCGETCVGGTCNTPGCSCSWPVCTRN). Intrachain disulfides connect Cys5/Cys19, Cys9/Cys21, and Cys14/Cys26.

Post-translationally, this is a cyclic peptide.

Its function is as follows. Probably participates in a plant defense mechanism. Has cytotoxic activity against a variety of drug-resistant and drug-sensitive human tumor cell lines, and against primary chronic lymphocytic leukemia cells. Has weak cytotoxic activity against primary ovarian carcinoma cells or normal lymphocytes. This chain is Varv peptide A, found in Viola arvensis (European field pansy).